Consider the following 236-residue polypeptide: Ribonuclease HII (236 aa).

Positions 27–219 constitute an RNase H type-2 domain; the sequence is RILCGVDEAG…VRRALDGAPP (193 aa). 3 residues coordinate a divalent metal cation: Asp-33, Glu-34, and Asp-128. Residues 212–236 form a disordered region; it reads RALDGAPPPAGDAVPQTDAKTAWAD.

Belongs to the RNase HII family. Mn(2+) serves as cofactor. Mg(2+) is required as a cofactor.

It is found in the cytoplasm. It catalyses the reaction Endonucleolytic cleavage to 5'-phosphomonoester.. Endonuclease that specifically degrades the RNA of RNA-DNA hybrids. The sequence is that of Ribonuclease HII from Ralstonia nicotianae (strain ATCC BAA-1114 / GMI1000) (Ralstonia solanacearum).